We begin with the raw amino-acid sequence, 975 residues long: 5'-3' exoribonuclease 2 homolog (975 aa).

Residues 262–279 (RACDLCGQYGHELKECRG) form a CCHC-type zinc finger. Disordered regions lie at residues 424–443 (MQMYGGGGRGGRGRGRGRGQ) and 505–532 (SPADIASRKRKAEQPLIKPEEEEDEGPK). Residues 534–787 (DIRLYESGWK…GICVLYEDPE (254 aa)) are interaction with paxt-1. Residues 804–821 (EPEKTLKPDDWNDRRDGR) are compositionally biased toward basic and acidic residues. Residues 804-975 (EPEKTLKPDD…GGYHGNSSWR (172 aa)) are disordered. Gly residues-rich tracts occupy residues 850-860 (RGGGGGGGGYR), 886-895 (NYGGRDGGGP), and 908-932 (GYQGGGYGGGYGGGGGGGGGGGGGS).

It belongs to the 5'-3' exonuclease family. XRN2/RAT1 subfamily. As to quaternary structure, interacts with paxt-1 (via N-terminus); the interaction is direct and results in stabilization of xrn-2 in the complex. Expressed in the pharyngeal myoepithelium and intestine. Also expressed in several anterior neurons including the sensory neurons, as well as the interneuron PVT and the pharyngeal motorneuron M5.

It is found in the nucleus. Possesses 5'-&gt;3' exoribonuclease activity. Plays a role in maintenance of steady-state concentration and turnover of microRNAs (miRNA) by degradation of mature miRNA. Degradation role is enhanced when in complex with paxt-1. Partially redundant to xrn-1 in miRNA guide strand degradation. Implicated in differential regulation of mRNAs such as let-7 by controlling the accumulation of mature miRNA. Positively regulates molting of the pharyngeal cuticle. This Caenorhabditis elegans protein is 5'-3' exoribonuclease 2 homolog.